We begin with the raw amino-acid sequence, 352 residues long: Pejvakin (352 aa).

Belongs to the gasdermin family. As to quaternary structure, interacts with MAP1LC3B; interaction is direct. Interacts with IQGAP1. Interacts with ROCK2. Interacts with TRIOBP.

The protein resides in the peroxisome membrane. Its subcellular location is the cell projection. It localises to the cilium. Its function is as follows. Peroxisome-associated protein required to protect auditory hair cells against noise-induced damage. Acts by regulating noise-induced peroxisome proliferation in auditory hair cells and neurons, and promoting autophagic degradation of damaged peroxisomes (pexophagy). Noise overexposure increases reactive oxygen species (ROS) levels, causing oxidative damage to auditory hair cells and resulting in hearing loss. PJVK acts as a ROS sensor that recruits the autophagy machinery to trigger pexophagy of peroxisomes damaged by oxidative stress. In addition to pexophagy, also required to promote peroxisome proliferation in response to sound overstimulation. This chain is Pejvakin, found in Homo sapiens (Human).